Reading from the N-terminus, the 396-residue chain is 8-amino-7-oxononanoate synthase (396 aa).

R21 serves as a coordination point for substrate. 108 to 109 (GY) is a pyridoxal 5'-phosphate binding site. Residue H133 coordinates substrate. Positions 179, 207, and 236 each coordinate pyridoxal 5'-phosphate. Position 239 is an N6-(pyridoxal phosphate)lysine (K239). T353 contributes to the substrate binding site.

The protein belongs to the class-II pyridoxal-phosphate-dependent aminotransferase family. BioF subfamily. Homodimer. The cofactor is pyridoxal 5'-phosphate.

The enzyme catalyses 6-carboxyhexanoyl-[ACP] + L-alanine + H(+) = (8S)-8-amino-7-oxononanoate + holo-[ACP] + CO2. It functions in the pathway cofactor biosynthesis; biotin biosynthesis. In terms of biological role, catalyzes the decarboxylative condensation of pimeloyl-[acyl-carrier protein] and L-alanine to produce 8-amino-7-oxononanoate (AON), [acyl-carrier protein], and carbon dioxide. The polypeptide is 8-amino-7-oxononanoate synthase (Hahella chejuensis (strain KCTC 2396)).